A 482-amino-acid polypeptide reads, in one-letter code: Major cardiolipin synthase ClsA (482 aa).

2 consecutive transmembrane segments (helical) span residues Ile-3–Ile-23 and Trp-34–Phe-54. PLD phosphodiesterase domains lie at Leu-217–Tyr-244 and Asp-395–Ser-422. Active-site residues include His-222, Lys-224, Asp-229, His-400, Lys-402, and Asp-407.

This sequence belongs to the phospholipase D family. Cardiolipin synthase subfamily.

The protein localises to the cell membrane. It carries out the reaction 2 a 1,2-diacyl-sn-glycero-3-phospho-(1'-sn-glycerol) = a cardiolipin + glycerol. Its function is as follows. Catalyzes the reversible phosphatidyl group transfer from one phosphatidylglycerol molecule to another to form cardiolipin (CL) (diphosphatidylglycerol) and glycerol. This is Major cardiolipin synthase ClsA (clsA) from Bacillus subtilis (strain 168).